A 488-amino-acid polypeptide reads, in one-letter code: HSPB1-associated protein 1 (488 aa).

The tract at residues 88-208 (ETTCNYVEAT…EDTPFLYPTR (121 aa)) is interaction with HSPB1. Residues 124–288 (WAYADYKYFV…HLARVEEAIT (165 aa)) enclose the JmjC domain. Polar residues predominate over residues 369–379 (QTGSQNLTTGT). Positions 369-415 (QTGSQNLTTGTDKPEAASPFGPDLVPVAQRSEEPPSERGGIFGSDGK) are disordered.

As to quaternary structure, interacts with CRYAB and HSPB1. Widely expressed.

It localises to the cytoplasm. May play a role in cellular stress response. The protein is HSPB1-associated protein 1 (HSPBAP1) of Homo sapiens (Human).